The chain runs to 66 residues: Large ribosomal subunit protein bL31 (66 aa).

Zn(2+) contacts are provided by C16, C18, C36, and C39.

The protein belongs to the bacterial ribosomal protein bL31 family. Type A subfamily. Part of the 50S ribosomal subunit. The cofactor is Zn(2+).

Its function is as follows. Binds the 23S rRNA. The polypeptide is Large ribosomal subunit protein bL31 (Campylobacter fetus subsp. fetus (strain 82-40)).